Reading from the N-terminus, the 1183-residue chain is Protein deacetylase HDAC6 (1183 aa).

Residues 1-61 are disordered; the sequence is MTSTGQDSST…KGKMKKLSQP (61 aa). Over residues 18-29 the composition is skewed to polar residues; the sequence is NPQSPLQDSSAT. Phosphoserine is present on S21. An Omega-N-methylarginine modification is found at R32. A Nuclear export signal motif is present at residues 66-75; it reads LIVGLQGLDL. 2 histone deacetylase regions span residues 86 to 434 and 512 to 830; these read GLVF…TLLG and GLVY…SLLG. The active-site 1 is H215. Catalysis depends on H641, which acts as the 2. The interval 972–1042 is disordered; that stretch reads ATENSANQTT…EAQEVQESEE (71 aa). Residues 980–996 are compositionally biased toward low complexity; the sequence is TTSGEEASGETESFGTS. Phosphothreonine is present on residues T990, T995, and T1005. The span at 997-1008 shows a compositional bias: polar residues; it reads PSSNASKQTTGA. Phosphoserine is present on S1009. The segment covering 1021 to 1035 has biased composition (low complexity); that stretch reads ELGLSSTLELSSEAQ. A UBP-type zinc finger spans residues 1079-1177; sequence SWCPHLMAVC…NAAHQNKFGE (99 aa). Residues C1081, H1083, C1101, C1104, C1113, C1116, and C1121 each coordinate Zn(2+). The ubiquitin binding stretch occupies residues 1122-1124; sequence SRY. H1128, H1132, H1138, C1151, and C1154 together coordinate Zn(2+). A ubiquitin binding region spans residues 1150 to 1157; sequence WCYLCQAY.

The protein belongs to the histone deacetylase family. HD type 2 subfamily. As to quaternary structure, forms a trimeric complex in the nucleus consisting of BANP, HDAC6 and KHDRBS1/SAM68; HDAC6 keeps KHDRBS1 in a deacetylated state which inhibits the inclusion of CD44 alternate exons. The complex is disrupted by MAPK1/MAPK3-mediated phosphorylation of BANP which results in BANP export to the cytoplasm. This facilitates acetylation of KHDRBS1 and CD44 variant exon inclusion. Interacts with SIRT2 (via both phosphorylated, unphosphorylated, active or inactive forms); the interaction is necessary for the complex to interact with alpha-tubulin. Under proteasome impairment conditions, interacts with UBD via its histone deacetylase 1 and UBP-type zinc-finger regions. Interacts with BBIP1, CBFA2T3, CYLD, DDIT3/CHOP, ZMYND15, F-actin and HDAC11. Interacts with RIPOR2; this interaction occurs during early myogenic differentiation and prevents HDAC6 to deacetylate tubulin. Interacts with AURKA; AURKA-mediated phosphorylation of HDAC6 promotes deacetylation of alpha-tubulin. Interacts with DYSF; this interaction occurs during early myogenic differentiation. Interacts with TPPP; inhibiting the tubulin deacetylase activity of HDAC6. Interacts with DYNLL1. Interacts with ATP13A2; the interaction results in recruitment of HDAC6 to lysosomes to promote CTTN deacetylation. Interacts with CCDC141 (via the N-terminal region); inhibiting the deacetylase activity of HDAC6. Interacts with IPO7; the interaction facilitates HDAC6 nuclear translocation in dental papilla cells. Requires Zn(2+) as cofactor. In terms of processing, phosphorylated by AURKA; phosphorylation increases HDAC6-mediated deacetylation of alpha-tubulin and subsequent disassembly of cilia. Ubiquitinated. Its polyubiquitination however does not lead to its degradation. Post-translationally, sumoylated in vitro.

It is found in the cytoplasm. It localises to the cytoskeleton. The protein resides in the nucleus. Its subcellular location is the perikaryon. The protein localises to the cell projection. It is found in the dendrite. It localises to the axon. The protein resides in the cilium. Its subcellular location is the microtubule organizing center. The protein localises to the centrosome. It is found in the cilium basal body. It carries out the reaction N(6)-acetyl-L-lysyl-[protein] + H2O = L-lysyl-[protein] + acetate. The enzyme catalyses N(6)-acetyl-L-lysyl-[alpha-tubulin] + H2O = L-lysyl-[alpha-tubulin] + acetate. It functions in the pathway protein modification; protein ubiquitination. Its function is as follows. Deacetylates a wide range of non-histone substrates. Plays a central role in microtubule-dependent cell motility by mediating deacetylation of tubulin. Required for cilia disassembly via deacetylation of alpha-tubulin. Alpha-tubulin deacetylation results in destabilization of dynamic microtubules. Promotes deacetylation of CTTN, leading to actin polymerization, promotion of autophagosome-lysosome fusion and completion of autophagy. Deacetylates SQSTM1. Deacetylates peroxiredoxins PRDX1 and PRDX2, decreasing their reducing activity. Deacetylates antiviral protein RIGI in the presence of viral mRNAs which is required for viral RNA detection by RIGI. Sequentially deacetylates and polyubiquitinates DNA mismatch repair protein MSH2 which leads to MSH2 degradation, reducing cellular sensitivity to DNA-damaging agents and decreasing cellular DNA mismatch repair activities. Deacetylates DNA mismatch repair protein MLH1 which prevents recruitment of the MutL alpha complex (formed by the MLH1-PMS2 heterodimer) to the MutS alpha complex (formed by the MSH2-MSH6 heterodimer), leading to tolerance of DNA damage. Deacetylates RHOT1/MIRO1 which blocks mitochondrial transport and mediates axon growth inhibition. Deacetylates transcription factor SP1 which leads to increased expression of ENG, positively regulating angiogenesis. Deacetylates KHDRBS1/SAM68 which regulates alternative splicing by inhibiting the inclusion of CD44 alternate exons. Promotes odontoblast differentiation following IPO7-mediated nuclear import and subsequent repression of RUNX2 expression. In addition to its protein deacetylase activity, plays a key role in the degradation of misfolded proteins: when misfolded proteins are too abundant to be degraded by the chaperone refolding system and the ubiquitin-proteasome, mediates the transport of misfolded proteins to a cytoplasmic juxtanuclear structure called aggresome. Probably acts as an adapter that recognizes polyubiquitinated misfolded proteins and targets them to the aggresome, facilitating their clearance by autophagy. The sequence is that of Protein deacetylase HDAC6 from Rattus norvegicus (Rat).